We begin with the raw amino-acid sequence, 160 residues long: Large ribosomal subunit protein uL11 (160 aa).

Belongs to the universal ribosomal protein uL11 family. Part of the ribosomal stalk of the 50S ribosomal subunit. Interacts with L10 and the large rRNA to form the base of the stalk. L10 forms an elongated spine to which L12 dimers bind in a sequential fashion forming a multimeric L10(L12)X complex.

Forms part of the ribosomal stalk which helps the ribosome interact with GTP-bound translation factors. In Nanoarchaeum equitans (strain Kin4-M), this protein is Large ribosomal subunit protein uL11.